We begin with the raw amino-acid sequence, 383 residues long: S-adenosylmethionine synthase (383 aa).

Histidine 15 contributes to the ATP binding site. A Mg(2+)-binding site is contributed by aspartate 17. Residue glutamate 43 coordinates K(+). L-methionine is bound by residues glutamate 56 and glutamine 99. A flexible loop region spans residues glutamine 99–arginine 109. ATP is bound by residues aspartate 164–lysine 166, arginine 230–phenylalanine 231, aspartate 239, arginine 245–lysine 246, alanine 262, and lysine 266. Residue aspartate 239 participates in L-methionine binding. L-methionine is bound at residue lysine 270.

It belongs to the AdoMet synthase family. Homotetramer; dimer of dimers. Mg(2+) is required as a cofactor. It depends on K(+) as a cofactor.

The protein localises to the cytoplasm. It catalyses the reaction L-methionine + ATP + H2O = S-adenosyl-L-methionine + phosphate + diphosphate. It participates in amino-acid biosynthesis; S-adenosyl-L-methionine biosynthesis; S-adenosyl-L-methionine from L-methionine: step 1/1. Catalyzes the formation of S-adenosylmethionine (AdoMet) from methionine and ATP. The overall synthetic reaction is composed of two sequential steps, AdoMet formation and the subsequent tripolyphosphate hydrolysis which occurs prior to release of AdoMet from the enzyme. This Pectobacterium atrosepticum (strain SCRI 1043 / ATCC BAA-672) (Erwinia carotovora subsp. atroseptica) protein is S-adenosylmethionine synthase.